The sequence spans 272 residues: Putative pyruvate, phosphate dikinase regulatory protein (272 aa).

Residue 153–160 (GVSRTSKT) participates in ADP binding.

This sequence belongs to the pyruvate, phosphate/water dikinase regulatory protein family. PDRP subfamily.

The catalysed reaction is N(tele)-phospho-L-histidyl/L-threonyl-[pyruvate, phosphate dikinase] + ADP = N(tele)-phospho-L-histidyl/O-phospho-L-threonyl-[pyruvate, phosphate dikinase] + AMP + H(+). The enzyme catalyses N(tele)-phospho-L-histidyl/O-phospho-L-threonyl-[pyruvate, phosphate dikinase] + phosphate + H(+) = N(tele)-phospho-L-histidyl/L-threonyl-[pyruvate, phosphate dikinase] + diphosphate. Its function is as follows. Bifunctional serine/threonine kinase and phosphorylase involved in the regulation of the pyruvate, phosphate dikinase (PPDK) by catalyzing its phosphorylation/dephosphorylation. This Streptococcus sanguinis (strain SK36) protein is Putative pyruvate, phosphate dikinase regulatory protein.